A 444-amino-acid chain; its full sequence is Tol-Pal system protein TolB (444 aa).

Residues 1 to 19 (MRNIIYFILSLLFSVTSYA) form the signal peptide.

Belongs to the TolB family. In terms of assembly, the Tol-Pal system is composed of five core proteins: the inner membrane proteins TolA, TolQ and TolR, the periplasmic protein TolB and the outer membrane protein Pal. They form a network linking the inner and outer membranes and the peptidoglycan layer.

It is found in the periplasm. Functionally, part of the Tol-Pal system, which plays a role in outer membrane invagination during cell division and is important for maintaining outer membrane integrity. This chain is Tol-Pal system protein TolB, found in Rickettsia conorii (strain ATCC VR-613 / Malish 7).